Here is a 61-residue protein sequence, read N- to C-terminus: Large ribosomal subunit protein uL30 (61 aa).

The protein belongs to the universal ribosomal protein uL30 family. Part of the 50S ribosomal subunit.

In Bordetella parapertussis (strain 12822 / ATCC BAA-587 / NCTC 13253), this protein is Large ribosomal subunit protein uL30.